A 195-amino-acid polypeptide reads, in one-letter code: Probable GTP-binding protein EngB (195 aa).

Residues 22–194 (LKGEVAFVGR…LDLISTLLKE (173 aa)) enclose the EngB-type G domain. GTP is bound by residues 30–37 (GRSNVGKS), 56–60 (GKTRS), 74–77 (DLPG), 141–144 (TKMD), and 173–175 (TSS). 2 residues coordinate Mg(2+): Ser-37 and Thr-58.

The protein belongs to the TRAFAC class TrmE-Era-EngA-EngB-Septin-like GTPase superfamily. EngB GTPase family. Requires Mg(2+) as cofactor.

Necessary for normal cell division and for the maintenance of normal septation. This Thermotoga petrophila (strain ATCC BAA-488 / DSM 13995 / JCM 10881 / RKU-1) protein is Probable GTP-binding protein EngB.